We begin with the raw amino-acid sequence, 337 residues long: D-alanine--D-alanine ligase (337 aa).

One can recognise an ATP-grasp domain in the interval 124–330 (KMWFSALGIP…FTEYLSLVIN (207 aa)). ATP is bound at residue 154 to 209 (ALAQWGSIFVKAASQGSSVGCYKVDDSDKVAGVLKDAFGYAPYVIVEKTIKARELE). Residues Asp-284, Glu-297, and Asn-299 each coordinate Mg(2+).

The protein belongs to the D-alanine--D-alanine ligase family. Requires Mg(2+) as cofactor. The cofactor is Mn(2+).

Its subcellular location is the cytoplasm. The catalysed reaction is 2 D-alanine + ATP = D-alanyl-D-alanine + ADP + phosphate + H(+). It functions in the pathway cell wall biogenesis; peptidoglycan biosynthesis. Cell wall formation. The polypeptide is D-alanine--D-alanine ligase (Shewanella baltica (strain OS195)).